We begin with the raw amino-acid sequence, 127 residues long: Fumarate reductase subunit C (127 aa).

Transmembrane regions (helical) follow at residues 30–50 (ATVL…GSLV), 67–87 (IVVA…QTFF), and 107–127 (IIVL…LIVM).

It belongs to the FrdC family. Part of an enzyme complex containing four subunits: a flavoprotein (FrdA), an iron-sulfur protein (FrdB), and two hydrophobic anchor proteins (FrdC and FrdD).

It is found in the cell inner membrane. In terms of biological role, anchors the catalytic components of the fumarate reductase complex to the cell membrane, binds quinones. This Vibrio campbellii (strain ATCC BAA-1116) protein is Fumarate reductase subunit C.